Consider the following 147-residue polypeptide: Large ribosomal subunit protein uL13 (147 aa).

Residues 128–147 form a disordered region; that stretch reads PEHPHSAQQPVPYELKQVAQ.

This sequence belongs to the universal ribosomal protein uL13 family. In terms of assembly, part of the 50S ribosomal subunit.

Functionally, this protein is one of the early assembly proteins of the 50S ribosomal subunit, although it is not seen to bind rRNA by itself. It is important during the early stages of 50S assembly. The polypeptide is Large ribosomal subunit protein uL13 (Mycobacterium bovis (strain BCG / Pasteur 1173P2)).